A 400-amino-acid chain; its full sequence is D-alanyl-D-alanine carboxypeptidase DacC (400 aa).

A signal peptide spans 1–27; the sequence is MTQYSSLLRGLAAGSAFLFLFAPTAFA. Catalysis depends on Ser-66, which acts as the Acyl-ester intermediate. Lys-69 functions as the Proton acceptor in the catalytic mechanism. Residue Ser-132 is part of the active site. Residue Lys-235 coordinates substrate. A required for inner membrane binding region spans residues 383–400; that stretch reads VWDFVMMKFHQWFGSWFS.

This sequence belongs to the peptidase S11 family.

The protein localises to the cell inner membrane. It carries out the reaction Preferential cleavage: (Ac)2-L-Lys-D-Ala-|-D-Ala. Also transpeptidation of peptidyl-alanyl moieties that are N-acyl substituents of D-alanine.. Its pathway is cell wall biogenesis; peptidoglycan biosynthesis. Its function is as follows. Removes C-terminal D-alanyl residues from sugar-peptide cell wall precursors. The protein is D-alanyl-D-alanine carboxypeptidase DacC (dacC) of Escherichia coli (strain K12).